The chain runs to 278 residues: Indole-3-glycerol phosphate synthase (278 aa).

It belongs to the TrpC family.

The catalysed reaction is 1-(2-carboxyphenylamino)-1-deoxy-D-ribulose 5-phosphate + H(+) = (1S,2R)-1-C-(indol-3-yl)glycerol 3-phosphate + CO2 + H2O. It functions in the pathway amino-acid biosynthesis; L-tryptophan biosynthesis; L-tryptophan from chorismate: step 4/5. This is Indole-3-glycerol phosphate synthase from Pseudomonas fluorescens (strain SBW25).